A 381-amino-acid chain; its full sequence is L-lactate dehydrogenase A-like 6B (381 aa).

NAD(+)-binding positions include 101–106 (DVDEGR) and Arg148. 3 residues coordinate substrate: Arg155, Asn187, and Arg218. Asn187 is a binding site for NAD(+). Residue His242 is the Proton acceptor of the active site. Residue Thr297 coordinates substrate.

The protein belongs to the LDH/MDH superfamily. LDH family.

The catalysed reaction is (S)-lactate + NAD(+) = pyruvate + NADH + H(+). It participates in fermentation; pyruvate fermentation to lactate; (S)-lactate from pyruvate: step 1/1. In Bos taurus (Bovine), this protein is L-lactate dehydrogenase A-like 6B (LDHAL6B).